The sequence spans 188 residues: Photosystem I assembly protein Ycf4 (188 aa).

The next 2 membrane-spanning stretches (helical) occupy residues 26-46 (YFWAIAVSVGGTGFLLAGLSS) and 68-88 (LVMGLYGIAAILLASYLWFVI).

It belongs to the Ycf4 family.

The protein localises to the cellular thylakoid membrane. Its function is as follows. Seems to be required for the assembly of the photosystem I complex. This is Photosystem I assembly protein Ycf4 from Synechococcus sp. (strain ATCC 27144 / PCC 6301 / SAUG 1402/1) (Anacystis nidulans).